The chain runs to 335 residues: Arylacetonitrilase (335 aa).

The CN hydrolase domain maps to 6-291; that stretch reads LKVAITQAQP…EGIVYADLDM (286 aa). The Proton acceptor role is filled by E46. Residue K127 is part of the active site. Catalysis depends on C168, which acts as the Nucleophile.

It belongs to the carbon-nitrogen hydrolase superfamily. Nitrilase family.

It catalyses the reaction a nitrile + 2 H2O = a carboxylate + NH4(+). The enzyme catalyses 4-chlorophenylacetonitrile + 2 H2O = 4-chlorophenylacetate + NH4(+). Functionally, nitrilase that hydrolyzes preferentially phenylacetonitrile, (R,S)-mandelonitrile, and 3-indolylacetonitrile. The protein is Arylacetonitrilase of Arthroderma benhamiae (strain ATCC MYA-4681 / CBS 112371) (Trichophyton mentagrophytes).